We begin with the raw amino-acid sequence, 1475 residues long: Peroxidasin homolog (1475 aa).

A signal peptide spans 1–23 (MAVRPTRRCLLALLLCFAWWAMA). The LRRNT domain occupies 24–60 (VVASKQGAGCPSRCLCFRTTVRCMHLLLEAVPAVAPQ). Disulfide bonds link Cys33/Cys39 and Cys37/Cys46. 6 LRR repeats span residues 58 to 81 (APQT…AFRR), 82 to 105 (LRSL…AFED), 107 to 129 (ENLK…AFKG), 130 to 153 (LASL…SFQH), 154 to 177 (LPKL…TFSQ), and 179 to 201 (ESMK…LWLA). Positions 189 to 241 (NALHCDCEILWLADLLKTYAQSGNAQAAATCEYPRRIQGRSVATITPEELNCE) constitute an LRRCT domain. Intrachain disulfides connect Cys193/Cys240, Cys195/Cys219, Cys264/Cys314, Cys360/Cys409, Cys451/Cys499, and Cys543/Cys591. Ig-like C2-type domains lie at 243 to 329 (PRIT…QEVT), 339 to 425 (PTFV…AFII), 430 to 517 (PQFT…LTVQ), and 518 to 607 (PRVT…MVLS). Asn387 carries N-linked (GlcNAc...) asparagine glycosylation. The stretch at 402-425 (SDSGEYTCFASNSVDSIHATAFII) is one LRR 7 repeat. 4 N-linked (GlcNAc...) asparagine glycosylation sites follow: Asn637, Asn696, Asn716, and Asn728. 4 cysteine pairs are disulfide-bonded: Cys720/Cys882, Cys729/Cys745, Cys844/Cys854, and Cys848/Cys872. Position 823 (Asp823) interacts with heme b. His824 (proton acceptor) is an active-site residue. Asp825 is a binding site for Ca(2+). Residues Thr904, Tyr906, Asp908, and Ser910 each coordinate Ca(2+). Cysteines 956 and 967 form a disulfide. N-linked (GlcNAc...) asparagine glycosylation is present at Asn961. Residues Glu977 and His1071 each coordinate heme b. The LRR 8 repeat unit spans residues 1148 to 1172 (ALDLAAINIQRGRDHGIPPYHDYRV). Residue Tyr1173 is modified to Phosphotyrosine. Disulfide bonds link Cys1174-Cys1231 and Cys1272-Cys1298. N-linked (GlcNAc...) asparagine glycosylation is present at Asn1175. Residue Ser1177 is modified to Phosphoserine. Residues 1267–1288 (LARILCDNSDNITRVQQDVFRV) form an LRR 9 repeat. Asn1277 and Asn1364 each carry an N-linked (GlcNAc...) asparagine glycan. The segment at 1312-1407 (CCEDCRTRGQ…QINSLESRLS (96 aa)) is required in homotrimerization. The VWFC domain maps to 1409–1467 (TECVDDSGESHGGNTKWKKDPCTVCECKNGQITCFVEACQPAACPQPVKVEGACCPVCL).

It belongs to the peroxidase family. XPO subfamily. Homotrimer; disulfide-linked. The homotrimer form is predominant. Homooligomer; disulfide-linked. Oligomerization occurs intracellularly before C-terminal proteolytic cleavage. Interacts with PXDNL; this interaction inhibits the peroxidase activity of PXDN. Requires Ca(2+) as cofactor. Heme b is required as a cofactor. Post-translationally, processed by FURIN and the proteolytic processing largely depends on the peroxidase activity of PXDN. The proteolytic cleavage occurs after intracellular homotrimerization and releases into the extracellular matrix a large, catalytically active fragment and a smaller fragment consisting primarily of the C-terminal VWFC domain. The processing enhances both peroxidase activity and sulfilimine cross-links formation. As to expression, highly expressed in the cardiovascular system. In the embryo, expressed in the corneal epithelial layer. In the adult eyes, expressed in the corneal and lens epithelium. Expressed in lung.

It localises to the secreted. The protein localises to the extracellular space. The protein resides in the extracellular matrix. It is found in the endoplasmic reticulum. Its subcellular location is the cell surface. It localises to the basement membrane. The enzyme catalyses L-lysyl-[collagen] + L-methionyl-[collagen] + H2O2 = [collagen]-L-lysyl-N-S-L-methionyl-[collagen] + 2 H2O + H(+). The catalysed reaction is bromide + H2O2 = hypobromite + H2O. It catalyses the reaction L-lysyl-[collagen] + L-methionyl-[collagen] + hypobromite = [collagen]-L-lysyl-N-S-L-methionyl-[collagen] + bromide + H2O + H(+). It carries out the reaction (5R)-5-hydroxy-L-lysyl-[collagen] + L-methionyl-[collagen] + hypobromite = [collagen]-(5R)-5-hydroxy-L-lysyl-N-S-L-methionyl-[collagen] + bromide + H2O + H(+). The enzyme catalyses (5R)-5-hydroxy-L-lysyl-[collagen] + L-methionyl-[collagen] + H2O2 = [collagen]-(5R)-5-hydroxy-L-lysyl-N-S-L-methionyl-[collagen] + 2 H2O + H(+). The catalysed reaction is L-tyrosyl-[protein] + bromide + H2O2 + H(+) = 3-bromo-L-tyrosyl-[protein] + 2 H2O. It catalyses the reaction hypobromite + L-tyrosyl-[protein] + H(+) = 3-bromo-L-tyrosyl-[protein] + H2O. Its activity is regulated as follows. Thiocyanate inhibits the formation of 3-bromotyrosine. Its function is as follows. Catalyzes the two-electron oxidation of bromide by hydrogen peroxide and generates hypobromite as a reactive intermediate which mediates the formation of sulfilimine cross-links between methionine and hydroxylysine residues within an uncross-linked collagen IV/COL4A1 NC1 hexamer. In turns, directly contributes to the collagen IV network-dependent fibronectin/FN and laminin assembly, which is required for full extracellular matrix (ECM)-mediated signaling. Thus, sulfilimine cross-links are essential for growth factor-induced cell proliferation and survival in endothelial cells, an event essential to basement membrane integrity. In addition, through the bromide oxidation, may promote tubulogenesis and induce angiogenesis through ERK1/2, Akt, and FAK pathways. Moreover brominates alpha2 collagen IV chain/COL4A2 at 'Tyr-1480' and leads to bromine enrichment of the basement membranes. In vitro, can also catalyze the two-electron oxidation of thiocyanate and iodide and these two substrates could effectively compete with bromide and thus inhibit the formation of sulfilimine bonds. Binds laminins. May play a role in the organization of eyeball structure and lens development during eye development. The chain is Peroxidasin homolog from Mus musculus (Mouse).